Reading from the N-terminus, the 691-residue chain is DNA ligase (691 aa).

NAD(+)-binding positions include 41 to 45, 90 to 91, and Glu130; these read DAEYD and SL. Catalysis depends on Lys132, which acts as the N6-AMP-lysine intermediate. 4 residues coordinate NAD(+): Arg153, Glu190, Lys307, and Lys331. Positions 425, 428, 443, and 449 each coordinate Zn(2+). One can recognise a BRCT domain in the interval 610–691; sequence APQGVLAGKT…LHQLLEGNTP (82 aa).

It belongs to the NAD-dependent DNA ligase family. LigA subfamily. It depends on Mg(2+) as a cofactor. Mn(2+) serves as cofactor.

It catalyses the reaction NAD(+) + (deoxyribonucleotide)n-3'-hydroxyl + 5'-phospho-(deoxyribonucleotide)m = (deoxyribonucleotide)n+m + AMP + beta-nicotinamide D-nucleotide.. In terms of biological role, DNA ligase that catalyzes the formation of phosphodiester linkages between 5'-phosphoryl and 3'-hydroxyl groups in double-stranded DNA using NAD as a coenzyme and as the energy source for the reaction. It is essential for DNA replication and repair of damaged DNA. This is DNA ligase from Burkholderia ambifaria (strain MC40-6).